Here is a 66-residue protein sequence, read N- to C-terminus: Ocellatin-PT1 (66 aa).

The N-terminal stretch at 1–22 (MAFLKKSLFLVLFLGLVSLSIC) is a signal peptide. Positions 23-39 (DEEKRQDEDDDDDDDEE) are excised as a propeptide. Valine 66 is modified (valine amide).

As to expression, expressed by the skin glands.

Its subcellular location is the secreted. Functionally, has antibacterial activity against Gram-negative bacterium E.coli ATCC 25922 (MIC=300 uM) but not against S.pneumoniae ATCC 700603, S.choleraesuis ATCC 14028 or Gram-positive bacterium S.aureus ATCC 29313. Shows virtually no hemolytic activity and no cytotoxicity. The protein is Ocellatin-PT1 of Leptodactylus pustulatus (Ceara white-lipped frog).